A 371-amino-acid chain; its full sequence is MSYITLTLPFNVGGSVAGDLFSTAWLFKTATHRMLSLAKQTPILPATDIGWKNTFRKAIYEVIPNRRYVDGVITLVRGIYESCRQLGVGFKEVELGDWLMFQQAEKEYPVRNITLKDDYSFYITTIGYNGEKDRIVVKPTIPKNYKVLLDKILEERQKHTARIVIKDYGVRKNRLWVHGEIQLTIPIDFYYKHMTRYRRNYGKLYGGVDVNVDRANLAVVDRYGRLRHVKTFWFEEASRKGCRSRRARSIIGMTVHDMLKYAYHHGVKTLFLENPDVLGKLKLLWIRNGKRLHRNYNWRVSVFRSRIIEMITMKTPLYAIRVEYVDPRRTTHSEEHDKIMKRYGLDRHSTSAYLIALRGIERYSSIQKVTA.

This sequence to A.pernix APE_1804 and S.solfataricus SSO2105.

This is an uncharacterized protein from Aeropyrum pernix (strain ATCC 700893 / DSM 11879 / JCM 9820 / NBRC 100138 / K1).